The sequence spans 268 residues: Adenosylcobinamide-GDP ribazoletransferase (268 aa).

Transmembrane regions (helical) follow at residues 1-21 (MAGN…TLPV), 36-56 (YLFI…GTLF), 59-79 (ILPA…LTGI), 112-132 (AGGL…AMTF), 138-158 (WLFV…ITII), 182-202 (LAAV…AAII), 212-232 (IMAG…ILII), and 244-264 (VIGA…GAVL).

It belongs to the CobS family. Mg(2+) serves as cofactor.

It localises to the cell membrane. It carries out the reaction alpha-ribazole + adenosylcob(III)inamide-GDP = adenosylcob(III)alamin + GMP + H(+). It catalyses the reaction alpha-ribazole 5'-phosphate + adenosylcob(III)inamide-GDP = adenosylcob(III)alamin 5'-phosphate + GMP + H(+). The protein operates within cofactor biosynthesis; adenosylcobalamin biosynthesis; adenosylcobalamin from cob(II)yrinate a,c-diamide: step 7/7. Joins adenosylcobinamide-GDP and alpha-ribazole to generate adenosylcobalamin (Ado-cobalamin). Also synthesizes adenosylcobalamin 5'-phosphate from adenosylcobinamide-GDP and alpha-ribazole 5'-phosphate. The sequence is that of Adenosylcobinamide-GDP ribazoletransferase from Methanocella arvoryzae (strain DSM 22066 / NBRC 105507 / MRE50).